We begin with the raw amino-acid sequence, 534 residues long: Prolyl 4-hydroxylase subunit alpha-1 (534 aa).

Residues 1–17 form the signal peptide; that stretch reads MIWYILVVGILLPQSLA. Asn-113 is a glycosylation site (N-linked (GlcNAc...) asparagine). One copy of the TPR repeat lies at 205–238; that stretch reads VSVLDYLSYAVYQQGDLDKALLLTKKLLELDPEH. A disordered region spans residues 258–277; the sequence is ANKSSSDDQSDQKTTLKKKG. An N-linked (GlcNAc...) asparagine glycan is attached at Asn-259. Positions 411–519 constitute a Fe2OG dioxygenase domain; the sequence is TAEELQVANY…KWVSNKWLHE (109 aa). Fe cation contacts are provided by His-429, Asp-431, and His-500. Residue Lys-510 participates in 2-oxoglutarate binding.

This sequence belongs to the P4HA family. Heterotetramer of two alpha-1 chains and two beta chains (P4HB)(the beta chain is the multi-functional PDI), where P4HB plays the role of a structural subunit; this tetramer catalyzes the formation of 4-hydroxyproline in collagen. Fe(2+) serves as cofactor. L-ascorbate is required as a cofactor.

It is found in the endoplasmic reticulum lumen. The enzyme catalyses L-prolyl-[collagen] + 2-oxoglutarate + O2 = trans-4-hydroxy-L-prolyl-[collagen] + succinate + CO2. Functionally, catalyzes the post-translational formation of 4-hydroxyproline in -Xaa-Pro-Gly- sequences in collagens and other proteins. In Bos taurus (Bovine), this protein is Prolyl 4-hydroxylase subunit alpha-1 (P4HA1).